Here is a 158-residue protein sequence, read N- to C-terminus: 3-hydroxyacyl-[acyl-carrier-protein] dehydratase FabZ (158 aa).

The active site involves histidine 61.

This sequence belongs to the thioester dehydratase family. FabZ subfamily.

The protein localises to the cytoplasm. The enzyme catalyses a (3R)-hydroxyacyl-[ACP] = a (2E)-enoyl-[ACP] + H2O. Its function is as follows. Involved in unsaturated fatty acids biosynthesis. Catalyzes the dehydration of short chain beta-hydroxyacyl-ACPs and long chain saturated and unsaturated beta-hydroxyacyl-ACPs. The sequence is that of 3-hydroxyacyl-[acyl-carrier-protein] dehydratase FabZ from Methylobacterium radiotolerans (strain ATCC 27329 / DSM 1819 / JCM 2831 / NBRC 15690 / NCIMB 10815 / 0-1).